The primary structure comprises 173 residues: UPF0398 protein SMU_470 (173 aa).

It belongs to the UPF0398 family.

The chain is UPF0398 protein SMU_470 from Streptococcus mutans serotype c (strain ATCC 700610 / UA159).